A 301-amino-acid polypeptide reads, in one-letter code: tRNA dimethylallyltransferase (301 aa).

Position 8–15 (8–15 (GPTAVGKT)) interacts with ATP. Position 10 to 15 (10 to 15 (TAVGKT)) interacts with substrate. Residues 33–36 (DSRQ) are interaction with substrate tRNA.

Belongs to the IPP transferase family. Monomer. The cofactor is Mg(2+).

It carries out the reaction adenosine(37) in tRNA + dimethylallyl diphosphate = N(6)-dimethylallyladenosine(37) in tRNA + diphosphate. Catalyzes the transfer of a dimethylallyl group onto the adenine at position 37 in tRNAs that read codons beginning with uridine, leading to the formation of N6-(dimethylallyl)adenosine (i(6)A). This Thermosipho africanus (strain TCF52B) protein is tRNA dimethylallyltransferase.